Consider the following 655-residue polypeptide: Phosphatidylinositol-3,5-bisphosphate 3-phosphatase MTMR6 (655 aa).

The region spanning 1–101 (MEHIRTTKVE…YNSLLQLSKQ (101 aa)) is the GRAM domain. The interaction with RAB1B stretch occupies residues 2-141 (EHIRTTKVEQ…AEYERMGVPN (140 aa)). Residue tyrosine 108 is modified to Phosphotyrosine. The 414-residue stretch at 124 to 537 (GWQLIDLAAE…FNFKFWRNMY (414 aa)) folds into the Myotubularin phosphatase domain. 3 residues coordinate a 1,2-diacyl-sn-glycero-3-phospho-(1D-myo-inositol-3,5-bisphosphate): asparagine 286, asparagine 311, and isoleucine 312. Asparagine 286, asparagine 311, and isoleucine 312 together coordinate a 1,2-diacyl-sn-glycero-3-phospho-(1D-myo-inositol-3-phosphate). Cysteine 374 serves as the catalytic Phosphocysteine intermediate. A 1,2-diacyl-sn-glycero-3-phospho-(1D-myo-inositol-3,5-bisphosphate)-binding residues include serine 375, aspartate 376, glycine 377, tryptophan 378, aspartate 379, arginine 380, lysine 416, and arginine 420. Residues serine 375, aspartate 376, glycine 377, tryptophan 378, aspartate 379, and arginine 380 each contribute to the a 1,2-diacyl-sn-glycero-3-phospho-(1D-myo-inositol-3-phosphate) site. Arginine 420 lines the a 1,2-diacyl-sn-glycero-3-phospho-(1D-myo-inositol-3-phosphate) pocket. A coiled-coil region spans residues 547–581 (RQSVLNIIMNMNEQNKQLEEDVKDLEAKIKQCKSG). Phosphoserine is present on residues serine 595, serine 623, and serine 645.

Belongs to the protein-tyrosine phosphatase family. Non-receptor class myotubularin subfamily. In terms of assembly, homodimer. Heterodimer (via C-terminus) with MTMR9 (via C-terminus). Interacts with ALKBH4. Interacts with KCNN4. Interacts (via GRAM domain) with RAB1B (in GDP-bound form); the interaction regulates MTMR6 recruitment to the endoplasmic reticulum-Golgi intermediate compartment.

The protein resides in the cytoplasm. It is found in the endoplasmic reticulum. The protein localises to the cell projection. It localises to the ruffle membrane. Its subcellular location is the endoplasmic reticulum-Golgi intermediate compartment. The protein resides in the perinuclear region. It carries out the reaction a 1,2-diacyl-sn-glycero-3-phospho-(1D-myo-inositol-3,5-bisphosphate) + H2O = a 1,2-diacyl-sn-glycero-3-phospho-(1D-myo-inositol-5-phosphate) + phosphate. It catalyses the reaction a 1,2-diacyl-sn-glycero-3-phospho-(1D-myo-inositol-3-phosphate) + H2O = a 1,2-diacyl-sn-glycero-3-phospho-(1D-myo-inositol) + phosphate. The enzyme catalyses 1,2-dioctanoyl-sn-glycero-3-phospho-(1D-myo-inositol-3,5-bisphosphate) + H2O = 1,2-dioctanoyl-sn-glycero-3-phospho-(1D-myo-inositol-5-phosphate) + phosphate. The catalysed reaction is 1,2-dioctanoyl-sn-glycero-3-phospho-(1-D-myo-inositol-3-phosphate) + H2O = 1,2-dioctanoyl-sn-glycero-3-phospho-(1D-myo-inositol) + phosphate. Allosterically activated by phosphatidylserine and/or phosphatidylinositol 4-phosphate (PtdIns(4)P), and phosphatidylinositol 5-phosphate (PtdIns(5)P). Interaction with MTMR9 increases catalytic activity towards phosphatidylinositol 3,5-bisphosphate. Lipid phosphatase that specifically dephosphorylates the D-3 position of phosphatidylinositol 3-phosphate and phosphatidylinositol 3,5-bisphosphate, generating phosphatidylinositol and phosphatidylinositol 5-phosphate. Binds with high affinity to phosphatidylinositol 3,5-bisphosphate (PtdIns(3,5)P2) but also to phosphatidylinositol 3-phosphate (PtdIns(3)P), phosphatidylinositol 4-phosphate (PtdIns(4)P), and phosphatidylinositol 5-phosphate (PtdIns(5)P), phosphatidic acid and phosphatidylserine. Negatively regulates ER-Golgi protein transport. Probably in association with MTMR9, plays a role in the late stages of macropinocytosis by dephosphorylating phosphatidylinositol 3-phosphate in membrane ruffles. Acts as a negative regulator of KCNN4/KCa3.1 channel activity in CD4(+) T-cells possibly by decreasing intracellular levels of phosphatidylinositol 3-phosphate. Negatively regulates proliferation of reactivated CD4(+) T-cells. In complex with MTMR9, negatively regulates DNA damage-induced apoptosis. The formation of the MTMR6-MTMR9 complex stabilizes both MTMR6 and MTMR9 protein levels. The sequence is that of Phosphatidylinositol-3,5-bisphosphate 3-phosphatase MTMR6 from Rattus norvegicus (Rat).